A 504-amino-acid polypeptide reads, in one-letter code: Maturase K (504 aa).

The protein belongs to the intron maturase 2 family. MatK subfamily.

Its subcellular location is the plastid. It is found in the chloroplast. Its function is as follows. Usually encoded in the trnK tRNA gene intron. Probably assists in splicing its own and other chloroplast group II introns. The sequence is that of Maturase K from Erythrina crista-galli (Cockspur coral tree).